A 185-amino-acid polypeptide reads, in one-letter code: Ribosome-recycling factor (185 aa).

The protein belongs to the RRF family.

It is found in the cytoplasm. Its function is as follows. Responsible for the release of ribosomes from messenger RNA at the termination of protein biosynthesis. May increase the efficiency of translation by recycling ribosomes from one round of translation to another. The chain is Ribosome-recycling factor from Geobacillus kaustophilus (strain HTA426).